We begin with the raw amino-acid sequence, 595 residues long: Indole-3-acetic acid-amido synthetase GH3.3 (595 aa).

Belongs to the IAA-amido conjugating enzyme family.

Its function is as follows. Catalyzes the synthesis of indole-3-acetic acid (IAA)-amino acid conjugates, providing a mechanism for the plant to cope with the presence of excess auxin. Strongly reactive with Glu, Gln, Trp, Asp, Ala, Leu, Phe, Gly, Tyr, Met, Ile and Val. Little or no product formation with His, Ser, Thr, Arg, Lys, or Cys. Also active on pyruvic and butyric acid analogs of IAA, PAA and the synthetic auxin naphthaleneacetic acid (NAA). The two chlorinated synthetic auxin herbicides 2,4-D and 3,6-dichloro-o-anisic acid (dicamba) cannot be used as substrates. The polypeptide is Indole-3-acetic acid-amido synthetase GH3.3 (GH3.3) (Arabidopsis thaliana (Mouse-ear cress)).